Reading from the N-terminus, the 37-residue chain is Large ribosomal subunit protein bL36 (37 aa).

This sequence belongs to the bacterial ribosomal protein bL36 family.

This chain is Large ribosomal subunit protein bL36 (rpmJ), found in Fusobacterium nucleatum subsp. nucleatum (strain ATCC 25586 / DSM 15643 / BCRC 10681 / CIP 101130 / JCM 8532 / KCTC 2640 / LMG 13131 / VPI 4355).